Here is a 171-residue protein sequence, read N- to C-terminus: NADH-quinone oxidoreductase subunit B 2 (171 aa).

Residues cysteine 37, cysteine 38, cysteine 102, and cysteine 132 each contribute to the [4Fe-4S] cluster site.

The protein belongs to the complex I 20 kDa subunit family. As to quaternary structure, NDH-1 is composed of 14 different subunits. Subunits NuoB, C, D, E, F, and G constitute the peripheral sector of the complex. [4Fe-4S] cluster serves as cofactor.

Its subcellular location is the cell inner membrane. It catalyses the reaction a quinone + NADH + 5 H(+)(in) = a quinol + NAD(+) + 4 H(+)(out). In terms of biological role, NDH-1 shuttles electrons from NADH, via FMN and iron-sulfur (Fe-S) centers, to quinones in the respiratory chain. Couples the redox reaction to proton translocation (for every two electrons transferred, four hydrogen ions are translocated across the cytoplasmic membrane), and thus conserves the redox energy in a proton gradient. The chain is NADH-quinone oxidoreductase subunit B 2 from Chromobacterium violaceum (strain ATCC 12472 / DSM 30191 / JCM 1249 / CCUG 213 / NBRC 12614 / NCIMB 9131 / NCTC 9757 / MK).